The sequence spans 124 residues: Large ribosomal subunit protein bL12 (124 aa).

It belongs to the bacterial ribosomal protein bL12 family. In terms of assembly, homodimer. Part of the ribosomal stalk of the 50S ribosomal subunit. Forms a multimeric L10(L12)X complex, where L10 forms an elongated spine to which 2 to 4 L12 dimers bind in a sequential fashion. Binds GTP-bound translation factors.

Forms part of the ribosomal stalk which helps the ribosome interact with GTP-bound translation factors. Is thus essential for accurate translation. In Hamiltonella defensa subsp. Acyrthosiphon pisum (strain 5AT), this protein is Large ribosomal subunit protein bL12.